The chain runs to 103 residues: Large ribosomal subunit protein bL21 (103 aa).

This sequence belongs to the bacterial ribosomal protein bL21 family. In terms of assembly, part of the 50S ribosomal subunit. Contacts protein L20.

In terms of biological role, this protein binds to 23S rRNA in the presence of protein L20. The polypeptide is Large ribosomal subunit protein bL21 (Yersinia enterocolitica serotype O:8 / biotype 1B (strain NCTC 13174 / 8081)).